A 258-amino-acid polypeptide reads, in one-letter code: Imidazole glycerol phosphate synthase subunit HisF (258 aa).

Catalysis depends on residues Asp11 and Asp130.

This sequence belongs to the HisA/HisF family. Heterodimer of HisH and HisF.

It is found in the cytoplasm. It catalyses the reaction 5-[(5-phospho-1-deoxy-D-ribulos-1-ylimino)methylamino]-1-(5-phospho-beta-D-ribosyl)imidazole-4-carboxamide + L-glutamine = D-erythro-1-(imidazol-4-yl)glycerol 3-phosphate + 5-amino-1-(5-phospho-beta-D-ribosyl)imidazole-4-carboxamide + L-glutamate + H(+). The protein operates within amino-acid biosynthesis; L-histidine biosynthesis; L-histidine from 5-phospho-alpha-D-ribose 1-diphosphate: step 5/9. Functionally, IGPS catalyzes the conversion of PRFAR and glutamine to IGP, AICAR and glutamate. The HisF subunit catalyzes the cyclization activity that produces IGP and AICAR from PRFAR using the ammonia provided by the HisH subunit. The sequence is that of Imidazole glycerol phosphate synthase subunit HisF from Methylobacterium nodulans (strain LMG 21967 / CNCM I-2342 / ORS 2060).